Here is a 250-residue protein sequence, read N- to C-terminus: 3-deoxy-manno-octulosonate cytidylyltransferase (250 aa).

Belongs to the KdsB family.

The protein localises to the cytoplasm. It catalyses the reaction 3-deoxy-alpha-D-manno-oct-2-ulosonate + CTP = CMP-3-deoxy-beta-D-manno-octulosonate + diphosphate. The protein operates within nucleotide-sugar biosynthesis; CMP-3-deoxy-D-manno-octulosonate biosynthesis; CMP-3-deoxy-D-manno-octulosonate from 3-deoxy-D-manno-octulosonate and CTP: step 1/1. It functions in the pathway bacterial outer membrane biogenesis; lipopolysaccharide biosynthesis. Activates KDO (a required 8-carbon sugar) for incorporation into bacterial lipopolysaccharide in Gram-negative bacteria. In Francisella philomiragia subsp. philomiragia (strain ATCC 25017 / CCUG 19701 / FSC 153 / O#319-036), this protein is 3-deoxy-manno-octulosonate cytidylyltransferase.